Consider the following 206-residue polypeptide: Large ribosomal subunit protein uL4 (206 aa).

The interval 63–97 (MYKQKGTGRARHHSARAPQFRGGGKAHGPVVRSHE) is disordered. A compositionally biased stretch (basic residues) spans 64–77 (YKQKGTGRARHHSA).

This sequence belongs to the universal ribosomal protein uL4 family. Part of the 50S ribosomal subunit.

In terms of biological role, one of the primary rRNA binding proteins, this protein initially binds near the 5'-end of the 23S rRNA. It is important during the early stages of 50S assembly. It makes multiple contacts with different domains of the 23S rRNA in the assembled 50S subunit and ribosome. Forms part of the polypeptide exit tunnel. The polypeptide is Large ribosomal subunit protein uL4 (Rhizobium johnstonii (strain DSM 114642 / LMG 32736 / 3841) (Rhizobium leguminosarum bv. viciae)).